The primary structure comprises 317 residues: tRNA dimethylallyltransferase (317 aa).

Position 19–26 (19–26 (GPTASGKS)) interacts with ATP. Substrate is bound at residue 21 to 26 (TASGKS). The segment at 49-52 (DSAQ) is interaction with substrate tRNA.

This sequence belongs to the IPP transferase family. Monomer. Mg(2+) is required as a cofactor.

It carries out the reaction adenosine(37) in tRNA + dimethylallyl diphosphate = N(6)-dimethylallyladenosine(37) in tRNA + diphosphate. Its function is as follows. Catalyzes the transfer of a dimethylallyl group onto the adenine at position 37 in tRNAs that read codons beginning with uridine, leading to the formation of N6-(dimethylallyl)adenosine (i(6)A). This chain is tRNA dimethylallyltransferase, found in Erythrobacter litoralis (strain HTCC2594).